The primary structure comprises 169 residues: Glycine-rich RNA-binding protein 8 (169 aa).

The RRM domain occupies 6–84 (YRCFVGGLAW…RVITVNEAQS (79 aa)). At arginine 47 the chain carries ADP-ribosylarginine; by HopU1. The segment at 80-99 (NEAQSRGSGGGGGGRGGSGG) is disordered. A compositionally biased stretch (gly residues) spans 86-99 (GSGGGGGGRGGSGG). The tract at residues 86–168 (GSGGGGGGRG…GGSYGGGGGG (83 aa)) is glycine-rich (GR) required for cell-to-cell movement. A nuclear targeting sequence (M9) region spans residues 95–143 (GGSGGGYRSGGGGGYSGGGGGGYSGGGGGGYERRSGGYGSGGGGGGRGY). Residue serine 103 is modified to Phosphoserine. The segment at 130–169 (GGYGSGGGGGGRGYGGGGRREGGGYGGGDGGSYGGGGGGW) is disordered.

Belongs to the GR-RBP family. Interacts with TRN1. Binds to small phloem-mobile single-stranded RNAs (ss-sRNA, e.g. small interfering RNA (siRNA) and microRNA (miRNA)) in the phloeme exudate, including viral-derived sRNA (vsiRNA). ADP-ribosylated by the Pseudomonas syringae type III effector HopU1. ADP-ribosylation reduces the ability of the protein to bind RNA. As to expression, ubiquitous.

It is found in the cytoplasm. The protein localises to the nucleus. Its subcellular location is the secreted. In terms of biological role, plays a role in RNA transcription or processing during stress. Binds RNAs and DNAs sequence with a preference to single-stranded nucleic acids. Involved in mRNA alternative splicing of numerous targets by modulating splice site selection. Negatively regulates the circadian oscillations of its own transcript as well as RBG7 transcript. Forms an interlocked post-transcriptional negative feedback loop with the RBG7 autoregulatory circuit. Both proteins negatively autoregulate and reciprocally crossregulate by binding to their pre-mRNAs and promoting unproductive splicing coupled to degradation via the NMD pathway. Target of the Pseudomonas syringae type III effector HopU1. Mediates cell-to-cell trafficking of RNA interference (RNAi) signals (small RNAs (sRNA), e.g. small interfering RNA (siRNA) and microRNA (miRNA)) which regulate growth and development, as well as responses to environmental inputs, including pathogen attack; can compromise zucchini yellow mosaic virus (ZYMV) and tobacco rattle virus (TRV) infections at the early stage. This is Glycine-rich RNA-binding protein 8 from Arabidopsis thaliana (Mouse-ear cress).